We begin with the raw amino-acid sequence, 82 residues long: Toxin NaTx-13 (82 aa).

Positions 6–70 constitute an LCN-type CS-alpha/beta domain; the sequence is PGGYPVNQFK…KNSIEVFSCG (65 aa). 4 cysteine pairs are disulfide-bonded: Cys-16/Cys-69, Cys-20/Cys-44, Cys-30/Cys-49, and Cys-34/Cys-51.

It belongs to the long (4 C-C) scorpion toxin superfamily. Sodium channel inhibitor family. As to expression, expressed by the venom gland.

The protein localises to the secreted. Probable sodium channel inhibitor. This is Toxin NaTx-13 from Centruroides sculpturatus (Arizona bark scorpion).